Consider the following 377-residue polypeptide: Probable transposase for insertion sequence element IS5377 (377 aa).

The protein belongs to the transposase 11 family.

The sequence is that of Probable transposase for insertion sequence element IS5377 from Geobacillus stearothermophilus (Bacillus stearothermophilus).